A 504-amino-acid chain; its full sequence is ATP synthase subunit alpha 2 (504 aa).

Residue 169 to 176 (GDRQTGKT) participates in ATP binding.

It belongs to the ATPase alpha/beta chains family. In terms of assembly, F-type ATPases have 2 components, CF(1) - the catalytic core - and CF(0) - the membrane proton channel. CF(1) has five subunits: alpha(3), beta(3), gamma(1), delta(1), epsilon(1). CF(0) has three main subunits: a(1), b(2) and c(9-12). The alpha and beta chains form an alternating ring which encloses part of the gamma chain. CF(1) is attached to CF(0) by a central stalk formed by the gamma and epsilon chains, while a peripheral stalk is formed by the delta and b chains.

The protein resides in the cell membrane. It catalyses the reaction ATP + H2O + 4 H(+)(in) = ADP + phosphate + 5 H(+)(out). Functionally, produces ATP from ADP in the presence of a proton gradient across the membrane. The alpha chain is a regulatory subunit. The protein is ATP synthase subunit alpha 2 of Listeria monocytogenes serotype 4b (strain F2365).